We begin with the raw amino-acid sequence, 353 residues long: 3'(2'),5'-bisphosphate nucleotidase 1 (353 aa).

Asp46 (proton acceptor) is an active-site residue. Mg(2+) is bound by residues Glu71, Asp134, Ile136, and Asp137. Thr139 (proton acceptor) is an active-site residue. Adenosine 3',5'-bisphosphate contacts are provided by Thr139, His235, Ser259, Lys262, Arg276, and Asp288. AMP-binding residues include His235, Ser259, Lys262, Arg276, and Asp288. Mg(2+) is bound at residue Asp288.

It belongs to the inositol monophosphatase superfamily. Requires Mg(2+) as cofactor. As to expression, expressed in roots, leaves, stems, flowers and siliques.

It carries out the reaction 3'-phosphoadenylyl sulfate + H2O = adenosine 5'-phosphosulfate + phosphate. The enzyme catalyses adenosine 3',5'-bisphosphate + H2O = AMP + phosphate. The catalysed reaction is adenosine 2',5'-bisphosphate + H2O = AMP + phosphate. It catalyses the reaction 1D-myo-inositol 1,4-bisphosphate + H2O = 1D-myo-inositol 4-phosphate + phosphate. It carries out the reaction 1D-myo-inositol 1,3,4-trisphosphate + H2O = 1D-myo-inositol 3,4-bisphosphate + phosphate. Its pathway is signal transduction; phosphatidylinositol signaling pathway. With respect to regulation, inhibited non-competitively by Li(+) (IC(50)=0.20 mM) and Na(+) (IC(50)=200 mM). Functionally, phosphatase that converts adenosine 3'-phosphate 5'-phosphosulfate (PAPS) to adenosine 5'-phosphosulfate (APS) and 3'(2')-phosphoadenosine 5'-phosphate (PAP) to AMP. May regulate the flux of sulfur in the sulfur-activation pathway by converting PAPS to APS. May play a role in the biosynthesis of sulfate conjugates and RNA processing. Is also able to hydrolyze inositol 1,4-bisphosphate and inositol 1,3,4-trisphosphate. Could be considered as a negative regulator of abscisic acid (ABA)- and stress-responsive genes, through modulating the inositol 1,4,5-trisphosphate (IP3) turnover. Is also involved in salt tolerance. Acts as a suppressor of virus- and transgene-induced silencing. This Arabidopsis thaliana (Mouse-ear cress) protein is 3'(2'),5'-bisphosphate nucleotidase 1.